A 64-amino-acid chain; its full sequence is Small cysteine-rich protein (64 aa).

The N-terminal stretch at 1–17 (FVCVQARQIDPEQILRT) is a signal peptide. The propeptide occupies 18–19 (PE).

Contains 4 disulfide bonds.

It localises to the secreted. The protein localises to the nematocyst. In Anemonia viridis (Snakelocks anemone), this protein is Small cysteine-rich protein.